The chain runs to 302 residues: Pantothenate synthetase (302 aa).

30-37 is an ATP binding site; that stretch reads MGALHGGH. His37 (proton donor) is an active-site residue. Gln61 is a binding site for (R)-pantoate. Gln61 provides a ligand contact to beta-alanine. 147 to 150 is an ATP binding site; it reads GEKD. A (R)-pantoate-binding site is contributed by Gln153. Residues Val176 and 184-187 each bind ATP; that span reads KSSR.

It belongs to the pantothenate synthetase family. In terms of assembly, homodimer.

It is found in the cytoplasm. The enzyme catalyses (R)-pantoate + beta-alanine + ATP = (R)-pantothenate + AMP + diphosphate + H(+). It functions in the pathway cofactor biosynthesis; (R)-pantothenate biosynthesis; (R)-pantothenate from (R)-pantoate and beta-alanine: step 1/1. Functionally, catalyzes the condensation of pantoate with beta-alanine in an ATP-dependent reaction via a pantoyl-adenylate intermediate. In Shouchella clausii (strain KSM-K16) (Alkalihalobacillus clausii), this protein is Pantothenate synthetase.